A 328-amino-acid chain; its full sequence is tRNA uridine(34) hydroxylase (328 aa).

The region spanning 130 to 224 is the Rhodanese domain; that stretch reads LDEDTVVLDT…YGKDPEVQGE (95 aa). The active-site Cysteine persulfide intermediate is the Cys184.

The protein belongs to the TrhO family.

The enzyme catalyses uridine(34) in tRNA + AH2 + O2 = 5-hydroxyuridine(34) in tRNA + A + H2O. Its function is as follows. Catalyzes oxygen-dependent 5-hydroxyuridine (ho5U) modification at position 34 in tRNAs. This Streptococcus pyogenes serotype M6 (strain ATCC BAA-946 / MGAS10394) protein is tRNA uridine(34) hydroxylase.